The following is an 846-amino-acid chain: DNA mismatch repair protein MutS (846 aa).

594-601 (GPNMSGKS) is a binding site for ATP.

It belongs to the DNA mismatch repair MutS family.

This protein is involved in the repair of mismatches in DNA. It is possible that it carries out the mismatch recognition step. This protein has a weak ATPase activity. In Macrococcus caseolyticus (strain JCSC5402) (Macrococcoides caseolyticum), this protein is DNA mismatch repair protein MutS.